The chain runs to 230 residues: Heptaprenylglyceryl phosphate synthase (230 aa).

A sn-glycerol 1-phosphate-binding site is contributed by lysine 12. The Mg(2+) site is built by aspartate 14 and serine 40. Sn-glycerol 1-phosphate-binding positions include 159 to 164 (YLEYSG), glycine 189, and 209 to 210 (GN).

Belongs to the GGGP/HepGP synthase family. Group I subfamily. In terms of assembly, homodimer. Mg(2+) is required as a cofactor.

The enzyme catalyses sn-glycerol 1-phosphate + all-trans-heptaprenyl diphosphate = 3-heptaprenyl-sn-glycero-1-phosphate + diphosphate. It functions in the pathway membrane lipid metabolism; glycerophospholipid metabolism. Functionally, prenyltransferase that catalyzes in vivo the transfer of the heptaprenyl moiety of heptaprenyl pyrophosphate (HepPP; 35 carbon atoms) to the C3 hydroxyl of sn-glycerol-1-phosphate (G1P), producing heptaprenylglyceryl phosphate (HepGP). This reaction is an ether-bond-formation step in the biosynthesis of archaea-type G1P-based membrane lipids found in Bacillales. The chain is Heptaprenylglyceryl phosphate synthase from Bacillus pumilus (strain SAFR-032).